A 794-amino-acid polypeptide reads, in one-letter code: Copper amine oxidase-like protein cao2 (794 aa).

Substrate-binding positions include 307–318 and 391–396; these read AYDLGEYGVGYR and AANYEY. Residue Asp-309 is the Proton acceptor of the active site. Residue Tyr-394 is the Schiff-base intermediate with substrate; via topaquinone of the active site. Residue Tyr-394 is modified to 2',4',5'-topaquinone. Cu cation-binding residues include His-445 and His-447. The interval 563-584 is disordered; that stretch reads GDYAPQASDDTPKGLSKWISDD. Positions 593 and 594 each coordinate Mn(2+). His-604 is a binding site for Cu cation. The segment at 634-748 is disordered; it reads ALDTSSSVNS…NGGHHHHHHH (115 aa). Low complexity predominate over residues 637-649; sequence TSSSVNSTSEATS. A compositionally biased stretch (basic and acidic residues) spans 652-714; that stretch reads THHENLRDTS…DAAQKHEGRS (63 aa). Residues 716 to 727 are compositionally biased toward polar residues; that stretch reads TLAQPGQQNANQ.

Belongs to the copper/topaquinone oxidase family. As to quaternary structure, homodimer. Requires Cu cation as cofactor. The cofactor is Zn(2+). It depends on L-topaquinone as a cofactor. Mn(2+) serves as cofactor. Topaquinone (TPQ) is generated by copper-dependent autoxidation of a specific tyrosyl residue.

The protein resides in the cytoplasm. It carries out the reaction a primary methyl amine + O2 + H2O = an aldehyde + H2O2 + NH4(+). In terms of biological role, copper amine oxidase-like protein that does not show any copper amine oxidase activity. May be the appropriate amine substrate for cao2 has not been identified yet. This chain is Copper amine oxidase-like protein cao2 (cao2), found in Schizosaccharomyces pombe (strain 972 / ATCC 24843) (Fission yeast).